Reading from the N-terminus, the 246-residue chain is Probable transcriptional regulatory protein APP7_1210 (246 aa).

The protein belongs to the TACO1 family.

It is found in the cytoplasm. The polypeptide is Probable transcriptional regulatory protein APP7_1210 (Actinobacillus pleuropneumoniae serotype 7 (strain AP76)).